A 219-amino-acid polypeptide reads, in one-letter code: Uracil-DNA glycosylase (219 aa).

Residue Asp59 is the Proton acceptor of the active site.

The protein belongs to the uracil-DNA glycosylase (UDG) superfamily. UNG family.

Its subcellular location is the cytoplasm. It carries out the reaction Hydrolyzes single-stranded DNA or mismatched double-stranded DNA and polynucleotides, releasing free uracil.. Excises uracil residues from the DNA which can arise as a result of misincorporation of dUMP residues by DNA polymerase or due to deamination of cytosine. The chain is Uracil-DNA glycosylase from Staphylococcus haemolyticus (strain JCSC1435).